The sequence spans 685 residues: Polyphosphate kinase (685 aa).

An ATP-binding site is contributed by Asn-45. The Mg(2+) site is built by Arg-375 and Arg-405. His-435 serves as the catalytic Phosphohistidine intermediate. Residues Tyr-468, Arg-564, and His-592 each contribute to the ATP site.

The protein belongs to the polyphosphate kinase 1 (PPK1) family. It depends on Mg(2+) as a cofactor. In terms of processing, an intermediate of this reaction is the autophosphorylated ppk in which a phosphate is covalently linked to a histidine residue through a N-P bond.

It catalyses the reaction [phosphate](n) + ATP = [phosphate](n+1) + ADP. Its function is as follows. Catalyzes the reversible transfer of the terminal phosphate of ATP to form a long-chain polyphosphate (polyP). This is Polyphosphate kinase from Neisseria meningitidis serogroup C (strain 053442).